The sequence spans 224 residues: ATP-dependent dethiobiotin synthetase BioD (224 aa).

Thr18 serves as a coordination point for Mg(2+). Lys39 is an active-site residue. Ser43 lines the substrate pocket. Mg(2+) is bound by residues Asp56 and Glu117. ATP-binding positions include Asp56, Glu117 to Gly120, and Asn177 to Glu178.

It belongs to the dethiobiotin synthetase family. Homodimer. Mg(2+) serves as cofactor.

It localises to the cytoplasm. The enzyme catalyses (7R,8S)-7,8-diammoniononanoate + CO2 + ATP = (4R,5S)-dethiobiotin + ADP + phosphate + 3 H(+). It functions in the pathway cofactor biosynthesis; biotin biosynthesis; biotin from 7,8-diaminononanoate: step 1/2. Functionally, catalyzes a mechanistically unusual reaction, the ATP-dependent insertion of CO2 between the N7 and N8 nitrogen atoms of 7,8-diaminopelargonic acid (DAPA, also called 7,8-diammoniononanoate) to form a ureido ring. This Xanthomonas euvesicatoria pv. vesicatoria (strain 85-10) (Xanthomonas campestris pv. vesicatoria) protein is ATP-dependent dethiobiotin synthetase BioD.